Consider the following 635-residue polypeptide: Transcription termination factor FttA (635 aa).

KHa regions lie at residues 1-69 (MSAE…PSVL) and 4-69 (EDIL…PSVL). The tract at residues 70-137 (VEPDIAKDKI…WAPKPVRTPP (68 aa)) is KHb. Metallo-beta-lactamase N-terminus regions lie at residues 179 to 382 (WVRT…YGGY) and 179 to 383 (WVRT…GGYD). 2 beta-Casp regions span residues 180-577 (VRTS…GFSG) and 383-576 (DDVL…EGFS). The Zn(2+) site is built by His241, His243, Asp245, His246, His328, and Asp351. Metallo-beta-lactamase C-terminus stretches follow at residues 577–635 (GHSD…IRLR) and 578–635 (HSDR…IRLR). His602 lines the Zn(2+) pocket.

This sequence belongs to the metallo-beta-lactamase superfamily. RNA-metabolizing metallo-beta-lactamase-like family. FttA subfamily. As to quaternary structure, homodimer. Interacts with RNA polymerase (RNAP); interaction is not dependent on DNA or RNA. Interacts with the Spt4-Spt5 complex. The cofactor is Zn(2+).

Its subcellular location is the chromosome. Functionally, terminates transcription on the whole genome. Termination is linked to FttA-mediated RNA cleavage and does not require NTP hydrolysis. Cleaves endonucleolytically at the RNA exit channel of RNA polymerase (RNAP); the 5'-3' exonuclease activity of this protein degrades the nascent RNA released from RNAP. In terms of biological role, terminates transcription genome-wide. Transcription termination is most effective in vivo on RNAs with more than one U4-tract in their 3'-ends (including non-protein coding RNAs); U4-tracts are recognized by this protein. Also plays a role in termination of RNAs without U-tracts by an unknown mechanism. Has endonuclease activity after U-rich tracts in transcription termination sites. Binds RNA at U4-tracts found directly upstream of the experimentally determined transcription termination sites; binds preferentially to RNAs with more U4-tracts at their 3'-ends. In Methanococcus maripaludis (strain DSM 14266 / JCM 13030 / NBRC 101832 / S2 / LL), this protein is Transcription termination factor FttA.